The following is a 242-amino-acid chain: Myogenic factor 6 (242 aa).

The disordered stretch occupies residues 31–63 (SPLYPGSDGTLSPCQDQMPQEAGSDSSGEEHVL). Residues 39-56 (GTLSPCQDQMPQEAGSDS) show a composition bias toward polar residues. A bHLH domain is found at 93–144 (DRRKAATLRERRRLKKINEAFEALKRRTVANPNQRLPKVEILRSAISYIERL).

In terms of assembly, efficient DNA binding requires dimerization with another bHLH protein. Interacts with CSRP3. In terms of tissue distribution, skeletal muscle.

The protein resides in the nucleus. In terms of biological role, involved in muscle differentiation (myogenic factor). Induces fibroblasts to differentiate into myoblasts. Probable sequence specific DNA-binding protein. The sequence is that of Myogenic factor 6 (Myf6) from Mus musculus (Mouse).